The sequence spans 178 residues: MYHQLILMALIGVIMANVVPFSMSNIPEEYKEFIPEEVKNFYKNLTQEDRQILRELASKHATFTNEDAALEALKNKSDKLYQKAVELRNFVKAKIDSLKPDAKAFVDEIIAKVRSLRPEDGQKLDVEKLKQAARDIIAKYEALNEETKEELKAPFPNTTKIITNEKFTRIANSFLQKN.

An N-terminal signal peptide occupies residues 1–16 (MYHQLILMALIGVIMA). N44 and N75 each carry an N-linked (GlcNAc...) asparagine glycan. Coiled-coil stretches lie at residues 67–89 (DAAL…ELRN) and 123–153 (KLDV…ELKA). Residue N157 is glycosylated (N-linked (GlcNAc...) asparagine).

This sequence belongs to the fatty-acid and retinol-binding protein (FARBP) family. Post-translationally, N-glycosylated.

It is found in the secreted. Binds retinol and different fatty acids. This Acanthocheilonema viteae (Filarial nematode worm) protein is Fatty-acid and retinol-binding protein 1.